An 877-amino-acid chain; its full sequence is METKVHLPLAYQQQVFNELIEEDGLCVIAPGLSLLQIAANVLSYFAVPGSLLLLVGANVDDIELIQHEMESHLEKKLITVNTETMSVDKREKSYLEGGIFAITSRILVMDLLTKIIPTEKITGIVLLHADRVVSTGTVAFIMRLYRETNKTGFIKAFSDDPEQFLMGINALSHCLRCLFLRHVFIYPRFHVVVAESLEKSPANVVELNVNLSDSQKTIQSCLLTCIESTMRELRRLNSAYLDMEDWNIESALHRSFDVIVRRQLDSVWHRVSPKTKQLVGDLSTLKFLLSALVCYDCVSFLKLLDTLVLSVNVSSYPSNAQPSPWLMLDAANKMIRVARDRVYKESEGPNMDAIPILEEQPKWSVLQDVLNEVCHETMLADTDAETSNNSIMIMCADERTCLQLRDYLSTVTYDNKDSLKNMNSKLVDYFQWREQYRKMSKSIKKPEPSKEREASNTTSRKGVPPSKRRRVRGGNNATSRTTSDNTDANDSFSRDLRLEKILLSHLSKRYEPEVGNDAFEVIDDFNSIYIYSYNGERDELVLNNLRPRYVIMFDSDPNFIRRVEVYKATYPKRSLRVYFMYYGGSIEEQKYLFSVRREKDSFSRLIKERSNMAIVLTADSERFESQESKFLRNVNTRIAGGGQLSITNEKPRVIVDLREFRSSLPSILHGNNFSVIPCQLLVGDYILSPKICVERKSIRDLIQSLSNGRLYSQCEAMTEYYEIPVLLIEFEQHQSFTSPPFSDLSSEIGKNDVQSKLVLLTLSFPNLRIVWSSSAYVTSIIFQDLKAMEQEPDPASAASIGLEAGQDSTNTYNQAPLDLLMGLPYITMKNYRNVFYGGVKDIQEASETSERKWSELIGPEAGRRLYSFFRKQLKDYE.

The residue at position 71 (Ser71) is a Phosphoserine; by CK2. The disordered stretch occupies residues 440–490 (SKSIKKPEPSKEREASNTTSRKGVPPSKRRRVRGGNNATSRTTSDNTDAND). Residues 444–454 (KKPEPSKEREA) are compositionally biased toward basic and acidic residues. Residues 475-490 (NNATSRTTSDNTDAND) show a composition bias toward polar residues. In terms of domain architecture, ERCC4 spans 652-732 (RVIVDLREFR…IPVLLIEFEQ (81 aa)).

This sequence belongs to the XPF family. In terms of assembly, heterodimer composed of rad16 and swi10.

It localises to the nucleus. The protein localises to the cytoplasm. It is found in the cytoskeleton. The protein resides in the microtubule organizing center. Its subcellular location is the spindle pole body. Functionally, endonuclease that specifically degrades single-stranded DNA and which is involved in nucleotide excision repair of DNA damaged with UV light, bulky adducts, or cross-linking agents. Required for double strand break-induced interchromosomal gene conversion. This is DNA repair protein rad16 (rad16) from Schizosaccharomyces pombe (strain 972 / ATCC 24843) (Fission yeast).